A 220-amino-acid polypeptide reads, in one-letter code: MNSAKLIDHTLLKPESTRTQIDQIIDEAKAYHFKSVCVNPTHVKYAAERLADSEVLVCTVIGFPLGASTTATKAFETEDAIQNGADEIDMVINIGALKDGRFDDVQQDIEAVVKAAKGHTVKVIIETVLLDHDEIVKASELTKAAGADFVKTSTGFAGGGATAEDVKLMKDTVGADIEVKASGGVRNLEDFNKMVEAGATRIGASAGVQIMQGLEADSDY.

D89 acts as the Proton donor/acceptor in catalysis. K151 functions as the Schiff-base intermediate with acetaldehyde in the catalytic mechanism. K180 (proton donor/acceptor) is an active-site residue.

The protein belongs to the DeoC/FbaB aldolase family. DeoC type 1 subfamily.

It is found in the cytoplasm. It carries out the reaction 2-deoxy-D-ribose 5-phosphate = D-glyceraldehyde 3-phosphate + acetaldehyde. It functions in the pathway carbohydrate degradation; 2-deoxy-D-ribose 1-phosphate degradation; D-glyceraldehyde 3-phosphate and acetaldehyde from 2-deoxy-alpha-D-ribose 1-phosphate: step 2/2. Functionally, catalyzes a reversible aldol reaction between acetaldehyde and D-glyceraldehyde 3-phosphate to generate 2-deoxy-D-ribose 5-phosphate. The chain is Deoxyribose-phosphate aldolase 2 from Staphylococcus aureus (strain COL).